The following is a 212-amino-acid chain: Sclerostin (212 aa).

The N-terminal stretch at 1–23 is a signal peptide; sequence MQLSLALCLVCLLVHAAFRVVEG. A glycan (N-linked (GlcNAc...) asparagine) is linked at Asn52. 4 cysteine pairs are disulfide-bonded: Cys79–Cys133, Cys93–Cys147, Cys104–Cys164, and Cys108–Cys166. A CTCK domain is found at 81–171; the sequence is ELHFTRYVTD…ASCKCKRLTR (91 aa). Asn174 carries an N-linked (GlcNAc...) asparagine glycan. The segment at 179-212 is disordered; sequence KDFGPEAARPQTGRKLRPRARGTKASRAELENAY. Basic residues predominate over residues 190 to 202; that stretch reads TGRKLRPRARGTK.

The protein belongs to the sclerostin family. As to quaternary structure, interacts with LRP4 (via the extracellular domain); the interaction facilitates the inhibition of Wnt signaling. Interacts with LRP5 (via the first two YWTD-EGF repeat domains); the interaction inhibits Wnt-mediated signaling. Interacts with LRP6.

The protein localises to the secreted. The protein resides in the extracellular space. Its subcellular location is the extracellular matrix. Negative regulator of bone growth that acts through inhibition of Wnt signaling and bone formation. The sequence is that of Sclerostin from Bos taurus (Bovine).